We begin with the raw amino-acid sequence, 339 residues long: Heat-inducible transcription repressor HrcA (339 aa).

It belongs to the HrcA family.

Functionally, negative regulator of class I heat shock genes (grpE-dnaK-dnaJ and groELS operons). Prevents heat-shock induction of these operons. The chain is Heat-inducible transcription repressor HrcA from Frankia casuarinae (strain DSM 45818 / CECT 9043 / HFP020203 / CcI3).